The primary structure comprises 182 residues: NADH-quinone oxidoreductase subunit I (182 aa).

4Fe-4S ferredoxin-type domains lie at 52-82 (LTRD…LQKA) and 92-121 (DFFR…LTPD). Cys-62, Cys-65, Cys-68, Cys-72, Cys-101, Cys-104, Cys-107, and Cys-111 together coordinate [4Fe-4S] cluster.

The protein belongs to the complex I 23 kDa subunit family. As to quaternary structure, NDH-1 is composed of 13 different subunits. Subunits NuoA, H, J, K, L, M, N constitute the membrane sector of the complex. [4Fe-4S] cluster is required as a cofactor.

Its subcellular location is the cell inner membrane. The enzyme catalyses a quinone + NADH + 5 H(+)(in) = a quinol + NAD(+) + 4 H(+)(out). In terms of biological role, NDH-1 shuttles electrons from NADH, via FMN and iron-sulfur (Fe-S) centers, to quinones in the respiratory chain. The immediate electron acceptor for the enzyme in this species is believed to be ubiquinone. Couples the redox reaction to proton translocation (for every two electrons transferred, four hydrogen ions are translocated across the cytoplasmic membrane), and thus conserves the redox energy in a proton gradient. The protein is NADH-quinone oxidoreductase subunit I of Pseudomonas syringae pv. tomato (strain ATCC BAA-871 / DC3000).